Reading from the N-terminus, the 541-residue chain is Glucose-6-phosphate isomerase (541 aa).

The active-site Proton donor is the Glu-346. Active-site residues include His-377 and Lys-506.

It belongs to the GPI family.

The protein resides in the cytoplasm. It catalyses the reaction alpha-D-glucose 6-phosphate = beta-D-fructose 6-phosphate. The protein operates within carbohydrate biosynthesis; gluconeogenesis. It participates in carbohydrate degradation; glycolysis; D-glyceraldehyde 3-phosphate and glycerone phosphate from D-glucose: step 2/4. Catalyzes the reversible isomerization of glucose-6-phosphate to fructose-6-phosphate. The chain is Glucose-6-phosphate isomerase from Agrobacterium fabrum (strain C58 / ATCC 33970) (Agrobacterium tumefaciens (strain C58)).